A 148-amino-acid chain; its full sequence is uncharacterized protein (148 aa).

A signal peptide spans 1–20 (MNLTKLLPAFAAAVVLSACA).

This is an uncharacterized protein from Haemophilus influenzae (strain ATCC 51907 / DSM 11121 / KW20 / Rd).